We begin with the raw amino-acid sequence, 158 residues long: Cysteine proteinase inhibitor 4 (158 aa).

Positions 1–24 (MAARCPVGVASVLLLIVLVTVASA) are cleaved as a signal peptide. Residues 26–51 (SGARSGGGGGGGIRELRGGGAGRRVG) form a disordered region. Over residues 29–49 (RSGGGGGGGIRELRGGGAGRR) the composition is skewed to gly residues. One can recognise a Cystatin domain in the interval 51–116 (GGRTEVRDVE…KYYLRVAAAE (66 aa)). Residues 101-105 (QVVSG) carry the Secondary area of contact motif.

Belongs to the cystatin family. Phytocystatin subfamily.

It localises to the secreted. Its function is as follows. Specific inhibitor of cysteine proteinases. Probably involved in the regulation of endogenous processes and in defense against pests and pathogens. The chain is Cysteine proteinase inhibitor 4 from Oryza sativa subsp. japonica (Rice).